We begin with the raw amino-acid sequence, 404 residues long: Floricaula/leafy-like protein FL1 (404 aa).

The segment at 210-251 is disordered; the sequence is IGVPEHSSESDERKADTNKQKRRRSKEPGEDGEDRPREHPFI. 2 stretches are compositionally biased toward basic and acidic residues: residues 215–228 and 235–249; these read HSSE…DTNK and KEPG…REHP. 3 consecutive DNA-binding regions follow at residues 246-250, 315-322, and 386-389; these read REHPF, NKPKMRHY, and YVPT.

This sequence belongs to the FLO/LFY family. Expressed in both male and female cones, vegetative buds and needles, but not in the roots.

Its subcellular location is the nucleus. In terms of biological role, probable transcription factor. The protein is Floricaula/leafy-like protein FL1 of Pinus radiata (Monterey pine).